The sequence spans 402 residues: UDP-glucose 6-dehydrogenase (402 aa).

Residues 2–19 (KIAV…GVLL), V11, D29, K34, T83, T118, and E145 contribute to the NAD(+) site. Substrate is bound by residues 141–145 (EFLRE), K204, N208, 249–253 (YNNPS), and G257. Residue Y259 participates in NAD(+) binding. The active-site Nucleophile is the C260. Residue K263 coordinates NAD(+). K320 provides a ligand contact to substrate. R327 lines the NAD(+) pocket.

The protein belongs to the UDP-glucose/GDP-mannose dehydrogenase family.

It carries out the reaction UDP-alpha-D-glucose + 2 NAD(+) + H2O = UDP-alpha-D-glucuronate + 2 NADH + 3 H(+). It participates in nucleotide-sugar biosynthesis; UDP-alpha-D-glucuronate biosynthesis; UDP-alpha-D-glucuronate from UDP-alpha-D-glucose: step 1/1. In terms of biological role, catalyzes the formation of UDP-glucuronic acid which is required for capsular hyaluronic acid synthesis. The chain is UDP-glucose 6-dehydrogenase (hasB) from Streptococcus pyogenes serotype M18 (strain MGAS8232).